Here is a 238-residue protein sequence, read N- to C-terminus: Ribonuclease PH (238 aa).

Phosphate-binding positions include R86 and 124 to 126 (GTR).

The protein belongs to the RNase PH family. As to quaternary structure, homohexameric ring arranged as a trimer of dimers.

The catalysed reaction is tRNA(n+1) + phosphate = tRNA(n) + a ribonucleoside 5'-diphosphate. Phosphorolytic 3'-5' exoribonuclease that plays an important role in tRNA 3'-end maturation. Removes nucleotide residues following the 3'-CCA terminus of tRNAs; can also add nucleotides to the ends of RNA molecules by using nucleoside diphosphates as substrates, but this may not be physiologically important. Probably plays a role in initiation of 16S rRNA degradation (leading to ribosome degradation) during starvation. The chain is Ribonuclease PH from Halorhodospira halophila (strain DSM 244 / SL1) (Ectothiorhodospira halophila (strain DSM 244 / SL1)).